The primary structure comprises 429 residues: Cytochrome c biogenesis protein CcsB (429 aa).

A run of 3 helical transmembrane segments spans residues 14-34 (LKVA…GTAL), 72-92 (SFWF…CSWK), and 162-182 (VGPP…TYGV).

The protein belongs to the Ccs1/CcsB family. In terms of assembly, may interact with CcsA.

The protein resides in the cellular thylakoid membrane. Functionally, required during biogenesis of c-type cytochromes (cytochrome c6 and cytochrome f) at the step of heme attachment. The polypeptide is Cytochrome c biogenesis protein CcsB (Prochlorococcus marinus (strain SARG / CCMP1375 / SS120)).